The sequence spans 356 residues: Fe(3+) ions import ATP-binding protein FbpC 2 (356 aa).

Residues 12–246 (LTVKNLNKFF…PNHLETAKFM (235 aa)) enclose the ABC transporter domain. 44-51 (GSSGCGKT) is a binding site for ATP.

The protein belongs to the ABC transporter superfamily. Fe(3+) ion importer (TC 3.A.1.10) family. As to quaternary structure, the complex is composed of two ATP-binding proteins (FbpC), two transmembrane proteins (FbpB) and a solute-binding protein (FbpA).

The protein resides in the cell inner membrane. It carries out the reaction Fe(3+)(out) + ATP + H2O = Fe(3+)(in) + ADP + phosphate + H(+). Functionally, part of the ABC transporter complex FbpABC involved in Fe(3+) ions import. Responsible for energy coupling to the transport system. This chain is Fe(3+) ions import ATP-binding protein FbpC 2, found in Haemophilus influenzae (strain ATCC 51907 / DSM 11121 / KW20 / Rd).